We begin with the raw amino-acid sequence, 1056 residues long: Contactin-5 (1056 aa).

Residues 1 to 14 (MKADSSSSSSMSSR) are compositionally biased toward low complexity. The tract at residues 1 to 33 (MKADSSSSSSMSSRMRLRNSHGVGSSSQDWSPF) is disordered. The segment covering 22 to 31 (GVGSSSQDWS) has biased composition (polar residues). Ig-like C2-type domains lie at 57–142 (PVFI…IVLS), 154–240 (PFSG…RVLS), 258–343 (PKIE…GHLQ), 348–432 (PQWI…AELK), 438–519 (PMFN…AELT), and 527–622 (PMRV…AELL). 3 cysteine pairs are disulfide-bonded: cysteine 81–cysteine 131, cysteine 175–cysteine 227, and cysteine 280–cysteine 327. Asparagine 96 and asparagine 119 each carry an N-linked (GlcNAc...) asparagine glycan. The N-linked (GlcNAc...) asparagine glycan is linked to asparagine 355. 3 disulfide bridges follow: cysteine 369–cysteine 416, cysteine 459–cysteine 507, and cysteine 549–cysteine 606. Asparagine 489 and asparagine 496 each carry an N-linked (GlcNAc...) asparagine glycan. Fibronectin type-III domains lie at 629-727 (PPGV…TKEA), 732-829 (APAN…SAEG), 834-928 (PPSE…TKKN), and 933-1023 (PPGN…TSSG). The segment at 711–736 (GTGDPSPPSRAVRTKEAVPSVAPANV) is disordered. 4 N-linked (GlcNAc...) asparagine glycosylation sites follow: asparagine 772, asparagine 887, asparagine 945, and asparagine 958. Asparagine 1035 is lipidated: GPI-anchor amidated asparagine. Residues 1036 to 1056 (SPPGLAWTALFLSLMVPSFPL) constitute a propeptide, removed in mature form.

The protein belongs to the immunoglobulin superfamily. Contactin family.

It localises to the cell membrane. Functionally, contactins mediate cell surface interactions during nervous system development. This Danio rerio (Zebrafish) protein is Contactin-5 (cntn5).